The sequence spans 269 residues: Formamidopyrimidine-DNA glycosylase (269 aa).

P2 functions as the Schiff-base intermediate with DNA in the catalytic mechanism. Catalysis depends on E3, which acts as the Proton donor. K57 serves as the catalytic Proton donor; for beta-elimination activity. Residues H90, R109, and K150 each coordinate DNA. The FPG-type zinc-finger motif lies at 235-269 (QVYGKGGLPCPKCGTELAEVKIGQRATVYCSQCQQ). The Proton donor; for delta-elimination activity role is filled by R259.

Belongs to the FPG family. As to quaternary structure, monomer. Zn(2+) serves as cofactor.

The enzyme catalyses Hydrolysis of DNA containing ring-opened 7-methylguanine residues, releasing 2,6-diamino-4-hydroxy-5-(N-methyl)formamidopyrimidine.. The catalysed reaction is 2'-deoxyribonucleotide-(2'-deoxyribose 5'-phosphate)-2'-deoxyribonucleotide-DNA = a 3'-end 2'-deoxyribonucleotide-(2,3-dehydro-2,3-deoxyribose 5'-phosphate)-DNA + a 5'-end 5'-phospho-2'-deoxyribonucleoside-DNA + H(+). Its function is as follows. Involved in base excision repair of DNA damaged by oxidation or by mutagenic agents. Acts as a DNA glycosylase that recognizes and removes damaged bases. Has a preference for oxidized purines, such as 7,8-dihydro-8-oxoguanine (8-oxoG). Has AP (apurinic/apyrimidinic) lyase activity and introduces nicks in the DNA strand. Cleaves the DNA backbone by beta-delta elimination to generate a single-strand break at the site of the removed base with both 3'- and 5'-phosphates. In Photobacterium damsela subsp. piscicida (Pasteurella piscicida), this protein is Formamidopyrimidine-DNA glycosylase.